The primary structure comprises 325 residues: Biotin synthase (325 aa).

In terms of domain architecture, Radical SAM core spans 46 to 270 (NNSNNIDLCS…IAICKLILPN (225 aa)). Positions 64, 68, and 71 each coordinate [4Fe-4S] cluster. Ser107, Cys139, Cys198, and Arg274 together coordinate [2Fe-2S] cluster.

The protein belongs to the radical SAM superfamily. Biotin synthase family. In terms of assembly, homodimer. [4Fe-4S] cluster serves as cofactor. The cofactor is [2Fe-2S] cluster.

It catalyses the reaction (4R,5S)-dethiobiotin + (sulfur carrier)-SH + 2 reduced [2Fe-2S]-[ferredoxin] + 2 S-adenosyl-L-methionine = (sulfur carrier)-H + biotin + 2 5'-deoxyadenosine + 2 L-methionine + 2 oxidized [2Fe-2S]-[ferredoxin]. It functions in the pathway cofactor biosynthesis; biotin biosynthesis; biotin from 7,8-diaminononanoate: step 2/2. In terms of biological role, catalyzes the conversion of dethiobiotin (DTB) to biotin by the insertion of a sulfur atom into dethiobiotin via a radical-based mechanism. This is Biotin synthase from Methanococcus aeolicus (strain ATCC BAA-1280 / DSM 17508 / OCM 812 / Nankai-3).